Consider the following 191-residue polypeptide: Small ribosomal subunit protein uS7 (191 aa).

The tract at residues 56–80 (NKSGEQGDGDGEGGGKAGGIKKRSL) is disordered.

This sequence belongs to the universal ribosomal protein uS7 family. As to quaternary structure, part of the 30S ribosomal subunit. Contacts proteins S9 and S11.

One of the primary rRNA binding proteins, it binds directly to 16S rRNA where it nucleates assembly of the head domain of the 30S subunit. Is located at the subunit interface close to the decoding center, probably blocks exit of the E-site tRNA. In Coxiella burnetii (strain CbuG_Q212) (Coxiella burnetii (strain Q212)), this protein is Small ribosomal subunit protein uS7.